Here is a 239-residue protein sequence, read N- to C-terminus: Ribonuclease PH (239 aa).

Phosphate is bound by residues arginine 86 and 124–126 (GTR).

It belongs to the RNase PH family. As to quaternary structure, homohexameric ring arranged as a trimer of dimers.

It catalyses the reaction tRNA(n+1) + phosphate = tRNA(n) + a ribonucleoside 5'-diphosphate. Phosphorolytic 3'-5' exoribonuclease that plays an important role in tRNA 3'-end maturation. Removes nucleotide residues following the 3'-CCA terminus of tRNAs; can also add nucleotides to the ends of RNA molecules by using nucleoside diphosphates as substrates, but this may not be physiologically important. Probably plays a role in initiation of 16S rRNA degradation (leading to ribosome degradation) during starvation. The polypeptide is Ribonuclease PH (Rhodopseudomonas palustris (strain BisB18)).